The sequence spans 344 residues: Methionine aminopeptidase 1C, chloroplastic/mitochondrial (344 aa).

His172 lines the substrate pocket. 3 residues coordinate a divalent metal cation: Asp189, Asp200, and His262. Substrate is bound at residue His269. The a divalent metal cation site is built by Glu296 and Glu327.

Belongs to the peptidase M24A family. Methionine aminopeptidase type 1 subfamily. It depends on Co(2+) as a cofactor. Zn(2+) serves as cofactor. The cofactor is Mn(2+). Fe(2+) is required as a cofactor. As to expression, ubiquitous.

The protein resides in the plastid. The protein localises to the chloroplast. It localises to the mitochondrion. It catalyses the reaction Release of N-terminal amino acids, preferentially methionine, from peptides and arylamides.. Functionally, removes the N-terminal methionine from nascent proteins. The N-terminal methionine is often cleaved when the second residue in the primary sequence is small and uncharged (Met-Ala-, Cys, Gly, Pro, Ser, Thr, or Val). In Arabidopsis thaliana (Mouse-ear cress), this protein is Methionine aminopeptidase 1C, chloroplastic/mitochondrial (MAP1C).